The chain runs to 421 residues: Dihydroorotase (421 aa).

The Zn(2+) site is built by H60 and H62. Substrate is bound by residues 62-64 (HFR) and N94. Zn(2+) is bound by residues D151, H178, and H231. N277 is a binding site for substrate. Zn(2+) is bound at residue D304. D304 is a catalytic residue. A substrate-binding site is contributed by H308.

Belongs to the metallo-dependent hydrolases superfamily. DHOase family. Class I DHOase subfamily. It depends on Zn(2+) as a cofactor.

It carries out the reaction (S)-dihydroorotate + H2O = N-carbamoyl-L-aspartate + H(+). It functions in the pathway pyrimidine metabolism; UMP biosynthesis via de novo pathway; (S)-dihydroorotate from bicarbonate: step 3/3. Catalyzes the reversible cyclization of carbamoyl aspartate to dihydroorotate. The sequence is that of Dihydroorotase from Clostridioides difficile (strain 630) (Peptoclostridium difficile).